Here is a 135-residue protein sequence, read N- to C-terminus: ATP synthase epsilon chain (135 aa).

Positions 89-100 are enriched in basic and acidic residues; it reads SGKAEAELEKAK. Residues 89–114 are disordered; that stretch reads SGKAEAELEKAKNQLSQNKDQGNSPE. Over residues 101-112 the composition is skewed to polar residues; the sequence is NQLSQNKDQGNS.

It belongs to the ATPase epsilon chain family. F-type ATPases have 2 components, CF(1) - the catalytic core - and CF(0) - the membrane proton channel. CF(1) has five subunits: alpha(3), beta(3), gamma(1), delta(1), epsilon(1). CF(0) has three main subunits: a, b and c.

The protein resides in the cellular thylakoid membrane. In terms of biological role, produces ATP from ADP in the presence of a proton gradient across the membrane. The chain is ATP synthase epsilon chain from Prochlorococcus marinus (strain NATL2A).